A 167-amino-acid polypeptide reads, in one-letter code: tRNA-specific adenosine deaminase (167 aa).

One can recognise a CMP/dCMP-type deaminase domain in the interval 6-117; that stretch reads FSHEYWMRHA…DAKTGAAGSL (112 aa). A Zn(2+)-binding site is contributed by histidine 57. Glutamate 59 functions as the Proton donor in the catalytic mechanism. 2 residues coordinate Zn(2+): cysteine 87 and cysteine 90.

The protein belongs to the cytidine and deoxycytidylate deaminase family. Homodimer. It depends on Zn(2+) as a cofactor.

It catalyses the reaction adenosine(34) in tRNA + H2O + H(+) = inosine(34) in tRNA + NH4(+). Catalyzes the deamination of adenosine to inosine at the wobble position 34 of tRNA(Arg2). Essential for cell viability. The sequence is that of tRNA-specific adenosine deaminase from Escherichia coli (strain K12).